The primary structure comprises 199 residues: Ribosomal RNA large subunit methyltransferase E (199 aa).

The S-adenosyl-L-methionine site is built by Gly-53, Trp-55, Asp-73, Asp-92, and Asp-114. The Proton acceptor role is filled by Lys-154.

Belongs to the class I-like SAM-binding methyltransferase superfamily. RNA methyltransferase RlmE family.

It localises to the cytoplasm. It carries out the reaction uridine(2552) in 23S rRNA + S-adenosyl-L-methionine = 2'-O-methyluridine(2552) in 23S rRNA + S-adenosyl-L-homocysteine + H(+). Specifically methylates the uridine in position 2552 of 23S rRNA at the 2'-O position of the ribose in the fully assembled 50S ribosomal subunit. The chain is Ribosomal RNA large subunit methyltransferase E from Treponema denticola (strain ATCC 35405 / DSM 14222 / CIP 103919 / JCM 8153 / KCTC 15104).